Reading from the N-terminus, the 630-residue chain is Zinc finger protein MSN4 (630 aa).

Met-1 is subject to N-acetylmethionine. The segment covering 37–56 has biased composition (low complexity); the sequence is TTNVSATSSNDNSANNSISS. Disordered regions lie at residues 37 to 77 and 115 to 137; these read TTNV…ATNT and FVND…DKIY. Ser-178 bears the Phosphoserine mark. The 9aaTAD signature appears at 237 to 245; that stretch reads SILEDFVSS. Ser-263 carries the phosphoserine modification. Residues 292–303 show a composition bias toward polar residues; sequence KNSSNSKPTQQI. Disordered regions lie at residues 292 to 322 and 360 to 379; these read KNSS…SPTT and SISS…RQQR. A phosphoserine mark is found at Ser-316 and Ser-319. The span at 360–373 shows a compositional bias: low complexity; the sequence is SISSSLNRISHSSS. Thr-479 is modified (phosphothreonine). Positions 502-566 are disordered; that stretch reads TSQAHHAAQH…KSITTIDPNN (65 aa). A compositionally biased stretch (low complexity) spans 504-515; that stretch reads QAHHAAQHHQQQ. Polar residues-rich tracts occupy residues 516–525 and 532–547; these read PTKQATVSPN and SSVT…NNNG. Residue Ser-558 is modified to Phosphoserine. 2 C2H2-type zinc fingers span residues 573 to 596 and 602 to 624; these read FKCK…RSVH and FACM…LKTH.

It is found in the cytoplasm. It localises to the nucleus. Positive transcriptional factor that acts as a component of the stress responsive system. Recognizes and binds to the stress response element (STRE) which is involved in the response to various forms of stress (heat, oxidative, osmotic, etc.). Involved in the regulation of the CTT1, DDR2, HSP12 genes. The sequence is that of Zinc finger protein MSN4 (MSN4) from Saccharomyces cerevisiae (strain ATCC 204508 / S288c) (Baker's yeast).